Reading from the N-terminus, the 623-residue chain is Set1/Ash2 histone methyltransferase complex subunit ASH2 (623 aa).

The span at 1-18 (MAAAGAGPGPGVSAGPGP) shows a compositional bias: gly residues. The PHD-type; atypical zinc finger occupies 1 to 62 (MAAAGAGPGP…SGEAESGDAN (62 aa)). The disordered stretch occupies residues 1 to 99 (MAAAGAGPGP…MDTQAGSVDE (99 aa)). A compositionally biased stretch (low complexity) spans 36–56 (AAGAGEGPSAAPGAEPSSGEA). Positions 63 to 172 (LVDVSGLETE…MCLSALANLT (110 aa)) are DNA-binding. Positions 84–95 (GDTSEVMDTQAG) are enriched in polar residues. Phosphoserine is present on Ser-96. A C4-type zinc finger spans residues 112–145 (CGICTKWFTADTFGIDTSSCLPFMTNYSFHCNVC). A compositionally biased stretch (basic and acidic residues) spans 230 to 247 (LVKEHPDPGSKDPEEDYP). Residues 230 to 326 (LVKEHPDPGS…AQRLPPHGYP (97 aa)) form a disordered region. Residues 265–277 (NQKQSSAVSASGN) are compositionally biased toward polar residues. Positions 278–290 (LNGGIAAGSSGKG) are enriched in gly residues. Arg-291 carries the asymmetric dimethylarginine; by PRMT1 and PRMT5 modification. The residue at position 311 (Ser-311) is a Phosphoserine. Residues 311–623 (SDPLFSAQRL…DGRRSPPWEP (313 aa)) form an interaction with RBBP5 region. Residues 355–578 (LDCWAGKPIP…VSINFGPSFK (224 aa)) form the B30.2/SPRY domain.

As to quaternary structure, interacts with HCFC1. Core component of several methyltransferase-containing complexes including MLL1/MLL, MLL2/3 (also named ASCOM complex) and MLL4/WBP7. Each complex is at least composed of ASH2L, RBBP5, WDR5, DPY30, one or more specific histone methyltransferases (KMT2A/MLL1, KMT2D/MLL2, KMT2C/MLL3 and KMT2B/MLL4), and the facultative components PAGR1, BACC1, CHD8, E2F6, HCFC1, HCFC2, HSP70, INO80C, KDM6A, KANSL1, LAS1L, MAX, MCRS1, MEN1, MGA, KAT8/MOF, NCOA6, PAXIP1/PTIP, PELP1, PHF20, PRP31, RING2, RUVB1/TIP49A, RUVB2/TIP49B, SENP3, TAF1, TAF4, TAF6, TAF7, TAF9, TEX10 and alpha- and beta-tubulin. Component of the SET1 complex, at least composed of the catalytic subunit (SETD1A or SETD1B), WDR5, WDR82, RBBP5, ASH2L/ASH2, CXXC1/CFP1, HCFC1 and DPY30. Found in a complex with RBBP5, ASH2L, DPY30, KMT2A, KMT2D and WDR5. Component of a histone methylation complex composed of at least ZNF335, RBBP5, ASH2L and WDR5; the complex may have histone H3-specific methyltransferase activity, however does not have specificity for 'Lys-4' of histone H3. Within the complex, interacts with ZNF335. Interacts with RBBP5. Components of this complex may associate with components of a nuclear receptor-mediated transcription complex to form a complex at least composed of ZNF335, HCFC1, CCAR2, EMSY, MKI67, RBBP5, ASH2L and WDR5. Within this complex also interacts with CCAR2 and EMSY. Interacts with DPY30. Interacts with SETD1A and SETD1B. Both monomethylated and dimethylated on arginine residues in the C-terminus. Arg-291 is the major site. Methylation is not required for nuclear localization, nor for MLL complex integrity or maintenance of global histone H3K4me3 levels. In terms of tissue distribution, ubiquitously expressed, with abundant expression in the heart, skeletal muscle and kidney. Low expression is seen in spleen, lung and testis.

It is found in the nucleus. Functionally, transcriptional regulator. Component or associated component of some histone methyltransferase complexes which regulates transcription through recruitment of those complexes to gene promoters. Component of the Set1/Ash2 histone methyltransferase (HMT) complex, a complex that specifically methylates 'Lys-4' of histone H3, but not if the neighboring 'Lys-9' residue is already methylated. As part of the MLL1/MLL complex it is involved in methylation and dimethylation at 'Lys-4' of histone H3. May play a role in hematopoiesis. In association with RBBP5 and WDR5, stimulates the histone methyltransferase activities of KMT2A, KMT2B, KMT2C, KMT2D, SETD1A and SETD1B. The sequence is that of Set1/Ash2 histone methyltransferase complex subunit ASH2 (Ash2l) from Mus musculus (Mouse).